We begin with the raw amino-acid sequence, 529 residues long: Type I restriction enzyme StySPI methylase subunit (529 aa).

S-adenosyl-L-methionine contacts are provided by residues 148–153, 178–180, and E216; these read QYFTPR and TAG. Positions 424–443 are disordered; sequence AEESEVADSEENKNADQHQA.

The protein belongs to the N(4)/N(6)-methyltransferase family. In terms of assembly, the type I restriction/modification system is composed of three polypeptides R, M and S; the restriction enzyme has stoichiometry R(2)M(2)S(1) while the methyltransferase is M(2)S(1).

It catalyses the reaction a 2'-deoxyadenosine in DNA + S-adenosyl-L-methionine = an N(6)-methyl-2'-deoxyadenosine in DNA + S-adenosyl-L-homocysteine + H(+). In terms of biological role, the subtype gamma methyltransferase (M) subunit of a type I restriction enzyme. The M and S subunits together form a methyltransferase (MTase) that methylates A-2 on the top strand and A-3 on the bottom strand of the sequence 5'-AACN(6)GTRC-3'. In the presence of the R subunit the complex can also act as an endonuclease, binding to the same target sequence but cutting the DNA some distance from this site. Whether the DNA is cut or modified depends on the methylation state of the target sequence. When the target site is unmodified, the DNA is cut. When the target site is hemimethylated, the complex acts as a maintenance MTase modifying the DNA so that both strands become methylated. After locating a non-methylated recognition site, the enzyme complex serves as a molecular motor that translocates DNA in an ATP-dependent manner until a collision occurs that triggers cleavage. The protein is Type I restriction enzyme StySPI methylase subunit of Salmonella potsdam.